The following is a 138-amino-acid chain: Large ribosomal subunit protein bL19 (138 aa).

This sequence belongs to the bacterial ribosomal protein bL19 family.

Functionally, this protein is located at the 30S-50S ribosomal subunit interface and may play a role in the structure and function of the aminoacyl-tRNA binding site. This is Large ribosomal subunit protein bL19 (rplS) from Rickettsia prowazekii (strain Madrid E).